Reading from the N-terminus, the 263-residue chain is Fructose-bisphosphate aldolase class 1 (263 aa).

The Schiff-base intermediate with dihydroxyacetone-P role is filled by K177.

Belongs to the DeoC/FbaB aldolase family.

It catalyses the reaction beta-D-fructose 1,6-bisphosphate = D-glyceraldehyde 3-phosphate + dihydroxyacetone phosphate. Its function is as follows. Has aldolase activity with fructose 1,6-bisphosphate. May play a role in the biosynthesis of aromatic amino acids (AroAA). The protein is Fructose-bisphosphate aldolase class 1 (fba1) of Halobacterium salinarum (strain ATCC 29341 / DSM 671 / R1).